We begin with the raw amino-acid sequence, 465 residues long: Chromosomal replication initiator protein DnaA (465 aa).

The segment at 1-87 (MLWTDCLTRL…RPGSILSSSE (87 aa)) is domain I, interacts with DnaA modulators. The tract at residues 81-123 (SILSSSEQPATTTAALQTAPIPQPAKVKREPEPVANTAVSSKS) is disordered. Positions 88–100 (QPATTTAALQTAP) are enriched in low complexity. The interval 88–127 (QPATTTAALQTAPIPQPAKVKREPEPVANTAVSSKSSKKK) is domain II. Positions 128–345 (LLNPQFTFSL…GALNKVVAIS (218 aa)) are domain III, AAA+ region. ATP is bound by residues Gly-173, Gly-175, Lys-176, and Thr-177. A domain IV, binds dsDNA region spans residues 346–465 (RFKGAPIDLD…YKNLLRLLQS (120 aa)).

This sequence belongs to the DnaA family. As to quaternary structure, oligomerizes as a right-handed, spiral filament on DNA at oriC.

Its subcellular location is the cytoplasm. Functionally, plays an essential role in the initiation and regulation of chromosomal replication. ATP-DnaA binds to the origin of replication (oriC) to initiate formation of the DNA replication initiation complex once per cell cycle. Binds the DnaA box (a 9 base pair repeat at the origin) and separates the double-stranded (ds)DNA. Forms a right-handed helical filament on oriC DNA; dsDNA binds to the exterior of the filament while single-stranded (ss)DNA is stabiized in the filament's interior. The ATP-DnaA-oriC complex binds and stabilizes one strand of the AT-rich DNA unwinding element (DUE), permitting loading of DNA polymerase. After initiation quickly degrades to an ADP-DnaA complex that is not apt for DNA replication. Binds acidic phospholipids. The sequence is that of Chromosomal replication initiator protein DnaA from Acinetobacter baumannii (strain ATCC 17978 / DSM 105126 / CIP 53.77 / LMG 1025 / NCDC KC755 / 5377).